Here is a 220-residue protein sequence, read N- to C-terminus: Thymidylate kinase (220 aa).

10-17 (GIDGCGKS) serves as a coordination point for ATP.

This sequence belongs to the thymidylate kinase family.

It carries out the reaction dTMP + ATP = dTDP + ADP. In terms of biological role, phosphorylation of dTMP to form dTDP in both de novo and salvage pathways of dTTP synthesis. This chain is Thymidylate kinase, found in Prochlorococcus marinus (strain SARG / CCMP1375 / SS120).